Here is a 1366-residue protein sequence, read N- to C-terminus: DNA-directed RNA polymerase subunit beta' (1366 aa).

Residues 1 to 20 show a composition bias toward basic residues; sequence MTSSKPKKTSRVRKTTKNSK. Residues 1–33 form a disordered region; it reads MTSSKPKKTSRVRKTTKNSKKNNPVTMPALAKT. The Zn(2+) site is built by cysteine 248, cysteine 315, cysteine 322, and cysteine 325. The segment at 1291 to 1366 is disordered; that stretch reads YTVDMPQSPA…LQEEGLLSDE (76 aa). The segment covering 1354-1366 has biased composition (low complexity); sequence LEGLQEEGLLSDE.

The protein belongs to the RNA polymerase beta' chain family. RpoC2 subfamily. In cyanobacteria the RNAP catalytic core is composed of 2 alpha, 1 beta, 1 beta', 1 gamma and 1 omega subunit. When a sigma factor is associated with the core the holoenzyme is formed, which can initiate transcription. Requires Zn(2+) as cofactor.

It carries out the reaction RNA(n) + a ribonucleoside 5'-triphosphate = RNA(n+1) + diphosphate. Functionally, DNA-dependent RNA polymerase catalyzes the transcription of DNA into RNA using the four ribonucleoside triphosphates as substrates. This Prochlorococcus marinus (strain AS9601) protein is DNA-directed RNA polymerase subunit beta'.